Here is a 282-residue protein sequence, read N- to C-terminus: 4-hydroxy-3-methylbut-2-enyl diphosphate reductase (282 aa).

Residue Cys-12 coordinates [4Fe-4S] cluster. His-40 and His-72 together coordinate (2E)-4-hydroxy-3-methylbut-2-enyl diphosphate. 2 residues coordinate dimethylallyl diphosphate: His-40 and His-72. Isopentenyl diphosphate contacts are provided by His-40 and His-72. Residue Cys-94 participates in [4Fe-4S] cluster binding. Position 122 (His-122) interacts with (2E)-4-hydroxy-3-methylbut-2-enyl diphosphate. His-122 is a binding site for dimethylallyl diphosphate. His-122 lines the isopentenyl diphosphate pocket. Glu-124 (proton donor) is an active-site residue. Residue Thr-160 participates in (2E)-4-hydroxy-3-methylbut-2-enyl diphosphate binding. Cys-188 is a binding site for [4Fe-4S] cluster. (2E)-4-hydroxy-3-methylbut-2-enyl diphosphate contacts are provided by Ser-216, Asn-218, and Ser-260. Residues Ser-216, Asn-218, and Ser-260 each coordinate dimethylallyl diphosphate. Isopentenyl diphosphate-binding residues include Ser-216, Asn-218, and Ser-260.

The protein belongs to the IspH family. [4Fe-4S] cluster serves as cofactor.

It catalyses the reaction isopentenyl diphosphate + 2 oxidized [2Fe-2S]-[ferredoxin] + H2O = (2E)-4-hydroxy-3-methylbut-2-enyl diphosphate + 2 reduced [2Fe-2S]-[ferredoxin] + 2 H(+). It carries out the reaction dimethylallyl diphosphate + 2 oxidized [2Fe-2S]-[ferredoxin] + H2O = (2E)-4-hydroxy-3-methylbut-2-enyl diphosphate + 2 reduced [2Fe-2S]-[ferredoxin] + 2 H(+). It functions in the pathway isoprenoid biosynthesis; dimethylallyl diphosphate biosynthesis; dimethylallyl diphosphate from (2E)-4-hydroxy-3-methylbutenyl diphosphate: step 1/1. The protein operates within isoprenoid biosynthesis; isopentenyl diphosphate biosynthesis via DXP pathway; isopentenyl diphosphate from 1-deoxy-D-xylulose 5-phosphate: step 6/6. Its function is as follows. Catalyzes the conversion of 1-hydroxy-2-methyl-2-(E)-butenyl 4-diphosphate (HMBPP) into a mixture of isopentenyl diphosphate (IPP) and dimethylallyl diphosphate (DMAPP). Acts in the terminal step of the DOXP/MEP pathway for isoprenoid precursor biosynthesis. The chain is 4-hydroxy-3-methylbut-2-enyl diphosphate reductase from Geobacter sulfurreducens (strain ATCC 51573 / DSM 12127 / PCA).